Reading from the N-terminus, the 132-residue chain is Small ribosomal subunit protein uS8 (132 aa).

This sequence belongs to the universal ribosomal protein uS8 family. In terms of assembly, part of the 30S ribosomal subunit. Contacts proteins S5 and S12.

Functionally, one of the primary rRNA binding proteins, it binds directly to 16S rRNA central domain where it helps coordinate assembly of the platform of the 30S subunit. This is Small ribosomal subunit protein uS8 from Rickettsia massiliae (strain Mtu5).